The chain runs to 1100 residues: MYKPVDPKVDFAKQEEDVLKFWEKNDVFKKSVSSRDGRDNYIFFDGPPFATGLPHFGHFVPGTIKDIIPRYKTMKGFRVERRFGWDCHGLPVENLIEKELGLNSKTDIEKYGIDKFNEACRASVLRYVKEWKQTITRLGRWVDFENDYKTMEPAFMESIWWVMKSLWEKGLLYEGYYILPYCPRCSTVLSNHELNLGGYKDVHDPAITVRFKTLSPVKTSPAGKAFEGKNALPSDTYLLAWTTTPWTLPSNLGLAVGADIDYALIEYDGAHYIMAVPRLEAYFAKSGKEEAKEYKLIWTKKGAELEGLRYEPLFPYFKNLAADENGKNAEAGQGAFRVLIGDFVTTEDGTGIVHTAPGFGEDDNRIFKDTGVPTVCPVDAECKFTHEVSDYQGLFVKDADKQIMERLKTEGKLFKKAQILHSYPHCWRCSSPLIYRAVASWFVSVTKIKDKLLNANSKINWQPDHIKTGRFGKWLEGARDWAISRNRYWGNPIPIWKCPDCGETICVGSREELKELSGVFPEDMHKHFVDKISIPCKKCGGTMKRVSEVLDCWFESGSMPYAQQHYPFENKEHFEKNFPADFISEGLDQTRGWFYTLTILAAALFDEPAFKNCIVNGLVLAEDGKKMSKSLRNYTDPNEVIKQFGADALRLFLMNSNVVKADDLKYSDEGVRDVLKGILIPFWNSYSFYITYANIDGVKPPHNAKVDGKDEGVEEFLAKLNNPLDLWILSVTEKLVADVTEALDKYDLSQAIPPMVEYIDLLNNWYIRRSRRRFWKSENDGDKSQAYETLYRALKKFSLVAAPVVPFITESIWQNLRTESDALSIHLADYPDYNEKIRNSELEFKMKTVQKAVSMGRALRYQFNLKIRQPLKAVEIVTLNPEEKRVLLEMEESIIEELNVKEVIFHEKEDELVEYSAKANFKVLGKELGPLMKKAAAIIEQMNSSEIQNIMEGATLSIDIEGKSVEITADKIVINRIEKASLKIVNEGTLTVGLNTELTEELLMEGYIRDLVRGIQTLRKECGLDVTDRIKLYLSASQKNADNKELEKAFELFKDYVCDETLTVQSSWLKTGELTKLGSIKTSLVEAGDYEWEIGIEKNN.

The short motif at 48–58 is the 'HIGH' region element; the sequence is PFATGLPHFGH. Positions 626–630 match the 'KMSKS' region motif; the sequence is KMSKS. Lys629 provides a ligand contact to ATP.

The protein belongs to the class-I aminoacyl-tRNA synthetase family. IleS type 2 subfamily. Monomer. Zn(2+) serves as cofactor.

The protein localises to the cytoplasm. It carries out the reaction tRNA(Ile) + L-isoleucine + ATP = L-isoleucyl-tRNA(Ile) + AMP + diphosphate. In terms of biological role, catalyzes the attachment of isoleucine to tRNA(Ile). As IleRS can inadvertently accommodate and process structurally similar amino acids such as valine, to avoid such errors it has two additional distinct tRNA(Ile)-dependent editing activities. One activity is designated as 'pretransfer' editing and involves the hydrolysis of activated Val-AMP. The other activity is designated 'posttransfer' editing and involves deacylation of mischarged Val-tRNA(Ile). The sequence is that of Isoleucine--tRNA ligase from Treponema denticola (strain ATCC 35405 / DSM 14222 / CIP 103919 / JCM 8153 / KCTC 15104).